Here is a 238-residue protein sequence, read N- to C-terminus: Uridylate kinase (238 aa).

Lysine 12 to glycine 15 serves as a coordination point for ATP. Residues glycine 20 to glycine 25 are involved in allosteric activation by GTP. Glycine 54 is a UMP binding site. Glycine 55 and arginine 59 together coordinate ATP. Residues aspartate 72 and threonine 133–threonine 140 each bind UMP. The ATP site is built by tyrosine 166 and aspartate 169.

Belongs to the UMP kinase family. Homohexamer.

Its subcellular location is the cytoplasm. It carries out the reaction UMP + ATP = UDP + ADP. The protein operates within pyrimidine metabolism; CTP biosynthesis via de novo pathway; UDP from UMP (UMPK route): step 1/1. Allosterically activated by GTP. Inhibited by UTP. Its function is as follows. Catalyzes the reversible phosphorylation of UMP to UDP. The chain is Uridylate kinase from Clostridium botulinum (strain Hall / ATCC 3502 / NCTC 13319 / Type A).